The following is a 482-amino-acid chain: Pentatricopeptide repeat-containing protein At1g74900, mitochondrial (482 aa).

PPR repeat units lie at residues 90-124 (DASSFDLAIDIAARLHLHPTVWSLIHRMRSLRIGP), 125-159 (SPKTFAIVAERYASAGKPDKAVKLFLNMHEHGCFQ), 160-190 (DLASFNTILDVLCKSKRVEKAYELFRALRGR), 194-228 (DTVTYNVILNGWCLIKRTPKALEVLKEMVERGINP), 229-263 (NLTTYNTMLKGFFRAGQIRHAWEFFLEMKKRDCEI), 264-298 (DVVTYTTVVHGFGVAGEIKRARNVFDEMIREGVLP), 299-333 (SVATYNAMIQVLCKKDNVENAVVMFEEMVRRGYEP), 334-368 (NVTTYNVLIRGLFHAGEFSRGEELMQRMENEGCEP), 369-403 (NFQTYNMMIRYYSECSEVEKALGLFEKMGSGDCLP), 404-441 (NLDTYNILISGMFVRKRSEDMVVAGKLLLEMVERGFIP), and 442-476 (RKFTFNRVLNGLLLTGNQAFAKEILRLQSKSGSRL).

Belongs to the PPR family. P subfamily.

It is found in the mitochondrion. Its function is as follows. Required for the trans-splicing of intron 1 of the mitochondrial nad1 transcript encoding the ND1 subunit of the mitochondrial membrane respiratory chain NADH dehydrogenase (Complex I). This Arabidopsis thaliana (Mouse-ear cress) protein is Pentatricopeptide repeat-containing protein At1g74900, mitochondrial (OTP43).